Reading from the N-terminus, the 197-residue chain is Dephospho-CoA kinase (197 aa).

The 196-residue stretch at 2 to 197 (IIGLTGGIGS…HTKYMELLNE (196 aa)) folds into the DPCK domain. 10–15 (GSGKSA) is a binding site for ATP.

Belongs to the CoaE family.

It localises to the cytoplasm. It carries out the reaction 3'-dephospho-CoA + ATP = ADP + CoA + H(+). The protein operates within cofactor biosynthesis; coenzyme A biosynthesis; CoA from (R)-pantothenate: step 5/5. Its function is as follows. Catalyzes the phosphorylation of the 3'-hydroxyl group of dephosphocoenzyme A to form coenzyme A. The polypeptide is Dephospho-CoA kinase (Gamma-proteobacterium EBAC31A08).